Here is a 232-residue protein sequence, read N- to C-terminus: Sec-independent protein translocase protein TatB (232 aa).

Residues methionine 1–glycine 21 traverse the membrane as a helical segment. Disordered regions lie at residues glutamate 108–proline 129 and alanine 176–arginine 232. 2 stretches are compositionally biased toward low complexity: residues alanine 189–alanine 203 and arginine 214–arginine 232.

The protein belongs to the TatB family. As to quaternary structure, the Tat system comprises two distinct complexes: a TatABC complex, containing multiple copies of TatA, TatB and TatC subunits, and a separate TatA complex, containing only TatA subunits. Substrates initially bind to the TatABC complex, which probably triggers association of the separate TatA complex to form the active translocon.

The protein resides in the cell inner membrane. In terms of biological role, part of the twin-arginine translocation (Tat) system that transports large folded proteins containing a characteristic twin-arginine motif in their signal peptide across membranes. Together with TatC, TatB is part of a receptor directly interacting with Tat signal peptides. TatB may form an oligomeric binding site that transiently accommodates folded Tat precursor proteins before their translocation. This chain is Sec-independent protein translocase protein TatB, found in Sodalis glossinidius (strain morsitans).